A 503-amino-acid polypeptide reads, in one-letter code: Protein phosphatase eya-1 (503 aa).

The active-site Nucleophile is Asp237. Mg(2+)-binding residues include Asp237 and Asp239. The active-site Proton donor is the Asp239.

This sequence belongs to the HAD-like hydrolase superfamily. EYA family. In terms of assembly, interacts (via C-terminus) with ceh-34 (via N-terminus). The cofactor is Mg(2+). In terms of tissue distribution, expressed in body wall muscles. Expressed in BAG sensory neurons and in other head neurons.

The protein localises to the nucleus. The catalysed reaction is O-phospho-L-tyrosyl-[protein] + H2O = L-tyrosyl-[protein] + phosphate. Tyrosine protein phosphatase. Acts probably as a transcription regulator in the embryonic and postembryonic development of several tissues including pharynx, vulva and gonads. Required for the development of anterior tissues during late embryogenesis. Together with ceh-34, required to specify the coelomocyte fate in embryonic and postembryonic precursors. In the anterior part of the embryo, prevents apoptosis in cells that are not fated to die. Together with ceh-34 activates proapoptotic factor egl-1 expression to promote motor neuron M4 sister cell apoptosis. Also promotes apoptosis of I1 pharyngeal neuron sister cell. Plays a role in locomotion and fertility. May play a role in resistance to heat and oxidative stresses. May cooperate with the transcription factors vab-3 and ceh-32 to repress transcription factor ets-5 expression in non BAG neuronal cells. This Caenorhabditis elegans protein is Protein phosphatase eya-1.